A 131-amino-acid polypeptide reads, in one-letter code: Small ribosomal subunit protein uS8 (131 aa).

Belongs to the universal ribosomal protein uS8 family. In terms of assembly, part of the 30S ribosomal subunit. Contacts proteins S5 and S12.

In terms of biological role, one of the primary rRNA binding proteins, it binds directly to 16S rRNA central domain where it helps coordinate assembly of the platform of the 30S subunit. This is Small ribosomal subunit protein uS8 from Campylobacter jejuni subsp. doylei (strain ATCC BAA-1458 / RM4099 / 269.97).